Here is a 292-residue protein sequence, read N- to C-terminus: Elongation factor Ts (292 aa).

The interval 81–84 (TDFV) is involved in Mg(2+) ion dislocation from EF-Tu.

Belongs to the EF-Ts family.

It localises to the cytoplasm. Its function is as follows. Associates with the EF-Tu.GDP complex and induces the exchange of GDP to GTP. It remains bound to the aminoacyl-tRNA.EF-Tu.GTP complex up to the GTP hydrolysis stage on the ribosome. This chain is Elongation factor Ts, found in Acidithiobacillus ferrooxidans (strain ATCC 23270 / DSM 14882 / CIP 104768 / NCIMB 8455) (Ferrobacillus ferrooxidans (strain ATCC 23270)).